The chain runs to 263 residues: MTDIRLYMLQSGSLKCKVHNIKMNQGNGADYEIPVPFFLITHPKGHTIIDGGNAVEVATDPRGHWGGVCDVYWPVMREDEGCVAQVKALGIDPADVKYVVQSHLHLDHTGAIGRFPNATHIVQRREYEYAFTPDWFAGGGYIRKDFDRPGLRWQFLNADVDDYYDIYGDGTLTTVFSPGHAPGHQSFLVRLPKSGPLLLTIDAAYTLDHWNEQALPGFLASTVDTVRSVQKLRTLAERTGAQVVTGHDPDAWPSFKKAPGYYD.

Positions 103, 105, 107, 108, 180, 202, and 247 each coordinate Zn(2+).

It belongs to the metallo-beta-lactamase superfamily. Requires Zn(2+) as cofactor.

The catalysed reaction is an N-acyl-L-homoserine lactone + H2O = an N-acyl-L-homoserine + H(+). This Azorhizobium caulinodans (strain ATCC 43989 / DSM 5975 / JCM 20966 / LMG 6465 / NBRC 14845 / NCIMB 13405 / ORS 571) protein is N-acyl homoserine lactonase AttM.